The primary structure comprises 366 residues: Ribosomal RNA large subunit methyltransferase M (366 aa).

S-adenosyl-L-methionine-binding positions include S188, 221–224 (CPGG), D240, D260, and D277. Residue K306 is the Proton acceptor of the active site.

It belongs to the class I-like SAM-binding methyltransferase superfamily. RNA methyltransferase RlmE family. RlmM subfamily. Monomer.

It localises to the cytoplasm. It carries out the reaction cytidine(2498) in 23S rRNA + S-adenosyl-L-methionine = 2'-O-methylcytidine(2498) in 23S rRNA + S-adenosyl-L-homocysteine + H(+). In terms of biological role, catalyzes the 2'-O-methylation at nucleotide C2498 in 23S rRNA. The protein is Ribosomal RNA large subunit methyltransferase M of Shigella boydii serotype 4 (strain Sb227).